A 615-amino-acid polypeptide reads, in one-letter code: NADH-quinone oxidoreductase subunit L (615 aa).

15 helical membrane passes run 1–21 (MNII…LSLI), 32–52 (IIGI…ITGF), 79–99 (LILD…GLLI), 113–133 (YSRF…LVLA), 136–156 (FLFM…LIGF), 168–188 (LKAF…MFLI), 247–267 (TPVS…YLIA), 279–299 (ILYL…FSAL), 327–347 (AWTA…LLFL), 372–392 (CPLL…FPLI), 410–430 (GYFN…IYTF), 457–477 (LLIL…LPLF), 491–511 (FLYE…AYHI), 536–556 (LNGW…YLFI), and 594–614 (YIST…CSFL).

Belongs to the complex I subunit 5 family. Composed of 13 different subunits. Subunits NuoA, H, J, K, L, M, N constitute the membrane sector of the complex.

The protein resides in the cell membrane. The catalysed reaction is a quinone + NADH + 5 H(+)(in) = a quinol + NAD(+) + 4 H(+)(out). Functionally, NDH-1 shuttles electrons from NADH, via FMN and iron-sulfur (Fe-S) centers, to quinones in the respiratory chain. Couples the redox reaction to proton translocation (for every two electrons transferred, four hydrogen ions are translocated across the cytoplasmic membrane), and thus conserves the redox energy in a proton gradient. The polypeptide is NADH-quinone oxidoreductase subunit L (nuoL) (Buchnera aphidicola subsp. Schizaphis graminum (strain Sg)).